We begin with the raw amino-acid sequence, 384 residues long: S-adenosylmethionine synthase (384 aa).

His15 contacts ATP. Position 17 (Asp17) interacts with Mg(2+). Glu43 lines the K(+) pocket. Positions 56 and 99 each coordinate L-methionine. Positions 99-109 are flexible loop; the sequence is QSPDINQGVDR. ATP contacts are provided by residues 164 to 166, 230 to 231, Asp239, 245 to 246, Ala262, and Lys266; these read DAK, RF, and RK. Asp239 contacts L-methionine. Residue Lys270 participates in L-methionine binding.

It belongs to the AdoMet synthase family. Homotetramer; dimer of dimers. Mg(2+) is required as a cofactor. It depends on K(+) as a cofactor.

The protein localises to the cytoplasm. It catalyses the reaction L-methionine + ATP + H2O = S-adenosyl-L-methionine + phosphate + diphosphate. The protein operates within amino-acid biosynthesis; S-adenosyl-L-methionine biosynthesis; S-adenosyl-L-methionine from L-methionine: step 1/1. In terms of biological role, catalyzes the formation of S-adenosylmethionine (AdoMet) from methionine and ATP. The overall synthetic reaction is composed of two sequential steps, AdoMet formation and the subsequent tripolyphosphate hydrolysis which occurs prior to release of AdoMet from the enzyme. This chain is S-adenosylmethionine synthase, found in Edwardsiella ictaluri (strain 93-146).